Reading from the N-terminus, the 610-residue chain is Zinc metalloproteinase-disintegrin-like 4a (610 aa).

The N-terminal stretch at 1–20 (MIQVLLVTISLAVFPYQGSS) is a signal peptide. Residues 21-189 (VILESGNVND…KKASQSNLTP (169 aa)) constitute a propeptide that is removed on maturation. In terms of domain architecture, Peptidase M12B spans 199–395 (KYVKLFLVAD…NMPQCILKKP (197 aa)). Residue Asn218 is glycosylated (N-linked (GlcNAc...) asparagine). Asp286 is a binding site for Ca(2+). Disulfide bonds link Cys310–Cys390, Cys350–Cys374, and Cys352–Cys357. His335 is a binding site for Zn(2+). The active site involves Glu336. The Zn(2+) site is built by His339 and His345. Cys390, Val405, Asn408, Phe410, Glu412, Glu415, and Asp418 together coordinate Ca(2+). In terms of domain architecture, Disintegrin spans 403–488 (PAVCGNYFVE…AECTDSFQRN (86 aa)). Intrachain disulfides connect Cys406–Cys435, Cys417–Cys430, Cys419–Cys425, Cys429–Cys452, Cys443–Cys449, Cys448–Cys474, Cys461–Cys481, Cys468–Cys499, Cys492–Cys504, Cys511–Cys561, Cys526–Cys572, Cys539–Cys549, Cys556–Cys598, and Cys592–Cys603. A D/ECD-tripeptide motif is present at residues 467–469 (ECD).

The protein belongs to the venom metalloproteinase (M12B) family. P-III subfamily. The cofactor is Zn(2+). In terms of tissue distribution, expressed by the venom gland.

It localises to the secreted. In terms of biological role, snake venom metalloproteinase that impairs hemostasis in the envenomed animal. The sequence is that of Zinc metalloproteinase-disintegrin-like 4a from Crotalus adamanteus (Eastern diamondback rattlesnake).